The sequence spans 565 residues: DNA-dependent metalloprotease SPRTN (565 aa).

The SprT-like domain occupies 23-130 (RALFLEFNDT…RTGANISVYH (108 aa)). Residue histidine 88 coordinates Zn(2+). Residue glutamate 89 is part of the active site. Residues histidine 92 and histidine 107 each contribute to the Zn(2+) site. The segment at 191–219 (EPENYPQKRKRKNDPTISEVNSSSHVKGK) is disordered. Positions 205-215 (PTISEVNSSSH) are enriched in polar residues. The SHP-box signature appears at 231-239 (FSGTGYKLF). A PIP-box motif is present at residues 288 to 295 (STPAQSIL). Residues 349–389 (TLPSPSIQSTSQKPQKDISFGFTLPSQSFPSTSPGSNSENK) are disordered. Polar residues-rich tracts occupy residues 351-361 (PSPSIQSTSQK) and 372-386 (LPSQ…GSNS). The segment at 436 to 463 (KVSCPVCGTEVLECKINDHLDTCTSSGP) adopts a UBZ4-type 1 zinc-finger fold. Residues cysteine 439, cysteine 442, histidine 454, and cysteine 458 each coordinate Zn(2+). The Nuclear localization signal motif lies at 476 to 499 (QSFPSTSQGSNSAIKEPLYKKLQI). The UBZ4-type 2 zinc-finger motif lies at 537-564 (KVCCPVCGTDVLQDKINDHLDTCLQNCN). Residues cysteine 540, cysteine 543, histidine 555, and cysteine 559 each coordinate Zn(2+).

It belongs to the Spartan family. As to quaternary structure, homodimer. It depends on Zn(2+) as a cofactor. Post-translationally, autocatalytically cleaved in response to double-stranded DNA-binding: autocatalytic cleavage takes place in trans and leads to inactivation.

The protein localises to the nucleus. It is found in the chromosome. Its activity is regulated as follows. DNA-binding activates the protease activity: single-stranded DNA-binding specifically activates ability to cleave covalent DNA-protein cross-links (DPCs). In contrast, double-stranded DNA-binding specifically activates autocatalytic cleavage, and subsequent inactivation. Its function is as follows. DNA-dependent metalloendopeptidase that mediates the proteolytic cleavage of covalent DNA-protein cross-links (DPCs) during DNA synthesis, thereby playing a key role in maintaining genomic integrity. DPCs are highly toxic DNA lesions that interfere with essential chromatin transactions, such as replication and transcription, and which are induced by reactive agents, such as UV light or formaldehyde. Associates with the DNA replication machinery and specifically removes DPCs during DNA synthesis. Catalyzes proteolytic cleavage of the hmces DNA-protein cross-link following unfolding by the brip1/fancj helicase. Acts as a pleiotropic protease for DNA-binding proteins cross-linked with DNA, such as top1, top2a, histones H3 and H4. Mediates degradation of DPCs that are not ubiquitinated, while it is not able to degrade ubiquitinated DPCs. SPRTN activation requires polymerase collision with DPCs followed by helicase bypass of DPCs. May also act as a 'reader' of ubiquitinated pcna: facilitates chromatin association of rad18 and is required for efficient pcna monoubiquitination, promoting a feed-forward loop to enhance pcna ubiquitination and translesion DNA synthesis. Acts as a regulator of translesion DNA synthesis by recruiting vcp/p97 to sites of DNA damage. This is DNA-dependent metalloprotease SPRTN from Xenopus laevis (African clawed frog).